Here is a 50-residue protein sequence, read N- to C-terminus: Temporin-SHb (50 aa).

Residues F1 to C10 form the signal peptide. Positions E11 to R35 are excised as a propeptide. Positions Q12–E31 are disordered. The span at R14–V30 shows a compositional bias: acidic residues. The residue at position 48 (L48) is a Leucine amide.

This sequence belongs to the frog skin active peptide (FSAP) family. Temporin subfamily. As to expression, expressed by the skin glands.

It is found in the secreted. Functionally, amphipathic alpha-helical peptide with no antimicrobial activity. Does not display anti-leishmania activity. Does not show hemolytic activity (LC(50)&gt;116 uM). This Pelophylax saharicus (Sahara frog) protein is Temporin-SHb.